A 306-amino-acid chain; its full sequence is MAKHVAVLMGGWSSEREVSLRSGAACAGALEAAGYRVTRVDVGRDVAEVLTHLKPDVAFNVLHGQPGEDGTIQGILEILRIPYSHSGVLASALAMDKAQARIMLAAAGVPVAKGGLVSRAEAAKAHIMPTPYVLKPNAGGSSVGVFIVREDQAHPPQELTREDWPHGENLLAEEFIPGLELTCAVMGDKVLDVIEIESTQKFYDYESKYAPGGSQHILPARILPEIYQRVQMLSLTAHRALGCRGVSRSDFRFDPSRGDGSGLICLEVNTQPGMTETSLVPELAAHAGISFGELVTWMVEDASLER.

Positions 101–300 (RIMLAAAGVP…FGELVTWMVE (200 aa)) constitute an ATP-grasp domain. 128–182 (MPTPYVLKPNAGGSSVGVFIVREDQAHPPQELTREDWPHGENLLAEEFIPGLELT) is a binding site for ATP. Mg(2+)-binding residues include Asp250, Glu267, and Asn269.

This sequence belongs to the D-alanine--D-alanine ligase family. It depends on Mg(2+) as a cofactor. Requires Mn(2+) as cofactor.

It is found in the cytoplasm. It carries out the reaction 2 D-alanine + ATP = D-alanyl-D-alanine + ADP + phosphate + H(+). It participates in cell wall biogenesis; peptidoglycan biosynthesis. In terms of biological role, cell wall formation. The protein is D-alanine--D-alanine ligase of Xanthobacter autotrophicus (strain ATCC BAA-1158 / Py2).